The following is a 65-amino-acid chain: Large ribosomal subunit protein uL29 (65 aa).

It belongs to the universal ribosomal protein uL29 family.

The protein is Large ribosomal subunit protein uL29 of Buchnera aphidicola subsp. Baizongia pistaciae (strain Bp).